Consider the following 216-residue polypeptide: Cytidylate kinase (216 aa).

10–18 (GPAAAGKST) provides a ligand contact to ATP.

This sequence belongs to the cytidylate kinase family. Type 1 subfamily.

The protein resides in the cytoplasm. It carries out the reaction CMP + ATP = CDP + ADP. It catalyses the reaction dCMP + ATP = dCDP + ADP. This chain is Cytidylate kinase, found in Macrococcus caseolyticus (strain JCSC5402) (Macrococcoides caseolyticum).